The chain runs to 278 residues: MAIIKYKPTSNGRRNMSGSDFAEITKTKPEKTLLVSQSHTAGRNAHGHITVRHRGGGHKQFYRVIDFKRNKDGMAATVKAIEYDPNRTANIALLHYEDGVKSYILAPKGLKVGDKVYSGEDVDIKVGNSLQLKNIPAGTTIHNIELKPGKGAQLARSAGVSAQLLGKDNDKYVTVKLASGEVRLILAENRATIGAVGNEQHELISIGKAGRKRWLGFRPTVRGSVMNPNDHPHGGGEGKAPIGHPSPMSPWGKKTLGKKTRDHKAKSEKFIVRHRRAK.

A disordered region spans residues 223 to 278; sequence GSVMNPNDHPHGGGEGKAPIGHPSPMSPWGKKTLGKKTRDHKAKSEKFIVRHRRAK. Residues 255–264 are compositionally biased toward basic residues; sequence TLGKKTRDHK.

This sequence belongs to the universal ribosomal protein uL2 family. As to quaternary structure, part of the 50S ribosomal subunit. Forms a bridge to the 30S subunit in the 70S ribosome.

In terms of biological role, one of the primary rRNA binding proteins. Required for association of the 30S and 50S subunits to form the 70S ribosome, for tRNA binding and peptide bond formation. It has been suggested to have peptidyltransferase activity; this is somewhat controversial. Makes several contacts with the 16S rRNA in the 70S ribosome. The sequence is that of Large ribosomal subunit protein uL2 from Lacticaseibacillus paracasei (strain ATCC 334 / BCRC 17002 / CCUG 31169 / CIP 107868 / KCTC 3260 / NRRL B-441) (Lactobacillus paracasei).